The sequence spans 185 residues: Elongation factor P (185 aa).

Belongs to the elongation factor P family.

Its subcellular location is the cytoplasm. The protein operates within protein biosynthesis; polypeptide chain elongation. Involved in peptide bond synthesis. Stimulates efficient translation and peptide-bond synthesis on native or reconstituted 70S ribosomes in vitro. Probably functions indirectly by altering the affinity of the ribosome for aminoacyl-tRNA, thus increasing their reactivity as acceptors for peptidyl transferase. The chain is Elongation factor P from Bacillus cytotoxicus (strain DSM 22905 / CIP 110041 / 391-98 / NVH 391-98).